Here is a 156-residue protein sequence, read N- to C-terminus: Ribonuclease pancreatic (156 aa).

An N-terminal signal peptide occupies residues 1–28 (MALEKSLVLLPLLVLALLVLGWIQPSLG). Residues Lys35 and Arg38 each coordinate substrate. His40 functions as the Proton acceptor in the catalytic mechanism. Intrachain disulfides connect Cys54–Cys112, Cys68–Cys123, Cys86–Cys138, and Cys93–Cys100. Residue Asn62 is glycosylated (N-linked (GlcNAc...) asparagine). Substrate is bound at residue 69–73 (KPVNT). Asn90 is a glycosylation site (N-linked (GlcNAc...) asparagine). Lys94 is a binding site for substrate. A glycan (N-linked (GlcNAc...) asparagine) is linked at Asn104. A substrate-binding site is contributed by Arg113. His147 (proton donor) is an active-site residue.

This sequence belongs to the pancreatic ribonuclease family. In terms of assembly, monomer. Interacts with and forms tight 1:1 complexes with RNH1. Dimerization of two such complexes may occur. Interaction with RNH1 inhibits this protein.

It is found in the secreted. It catalyses the reaction an [RNA] containing cytidine + H2O = an [RNA]-3'-cytidine-3'-phosphate + a 5'-hydroxy-ribonucleotide-3'-[RNA].. It carries out the reaction an [RNA] containing uridine + H2O = an [RNA]-3'-uridine-3'-phosphate + a 5'-hydroxy-ribonucleotide-3'-[RNA].. Its function is as follows. Endonuclease that catalyzes the cleavage of RNA on the 3' side of pyrimidine nucleotides. Acts on single-stranded and double-stranded RNA. In Lemur catta (Ring-tailed lemur), this protein is Ribonuclease pancreatic (RNASE1).